A 953-amino-acid polypeptide reads, in one-letter code: 2-oxoglutarate dehydrogenase E1 component (953 aa).

Belongs to the alpha-ketoglutarate dehydrogenase family. As to quaternary structure, homodimer. Part of the 2-oxoglutarate dehydrogenase (OGDH) complex composed of E1 (2-oxoglutarate dehydrogenase), E2 (dihydrolipoamide succinyltransferase) and E3 (dihydrolipoamide dehydrogenase); the complex contains multiple copies of the three enzymatic components (E1, E2 and E3). It depends on thiamine diphosphate as a cofactor.

The enzyme catalyses N(6)-[(R)-lipoyl]-L-lysyl-[protein] + 2-oxoglutarate + H(+) = N(6)-[(R)-S(8)-succinyldihydrolipoyl]-L-lysyl-[protein] + CO2. E1 component of the 2-oxoglutarate dehydrogenase (OGDH) complex which catalyzes the decarboxylation of 2-oxoglutarate, the first step in the conversion of 2-oxoglutarate to succinyl-CoA and CO(2). The protein is 2-oxoglutarate dehydrogenase E1 component of Oceanobacillus iheyensis (strain DSM 14371 / CIP 107618 / JCM 11309 / KCTC 3954 / HTE831).